Consider the following 59-residue polypeptide: Large ribosomal subunit protein bL32 (59 aa).

This sequence belongs to the bacterial ribosomal protein bL32 family.

This Mesoplasma florum (strain ATCC 33453 / NBRC 100688 / NCTC 11704 / L1) (Acholeplasma florum) protein is Large ribosomal subunit protein bL32.